Reading from the N-terminus, the 135-residue chain is Large ribosomal subunit protein bL17 (135 aa).

It belongs to the bacterial ribosomal protein bL17 family. In terms of assembly, part of the 50S ribosomal subunit. Contacts protein L32.

This is Large ribosomal subunit protein bL17 from Listeria welshimeri serovar 6b (strain ATCC 35897 / DSM 20650 / CCUG 15529 / CIP 8149 / NCTC 11857 / SLCC 5334 / V8).